The following is a 1621-amino-acid chain: Nestin (1621 aa).

Met-1 bears the N-acetylmethionine mark. The tract at residues 1-7 (MEGCMGE) is head. The interval 8–43 (ESFQMWELNRRLEAYLARVKALEEQNELLSAELGGL) is coil 1A. Positions 8 to 313 (ESFQMWELNR…TLLEAENSRL (306 aa)) constitute an IF rod domain. A linker 1 region spans residues 44 to 55 (RAQSADTSWRAH). The coil 1B stretch occupies residues 56 to 151 (ADDELAALRA…VAHEEERVGL (96 aa)). The linker 12 stretch occupies residues 152 to 173 (NAQAACAPRCPAPPRGPPAPAP). The coil 2A stretch occupies residues 174–192 (EVEELARRLGEAWRGAVRG). Residues 193-195 (YQE) are linker 2. The segment at 196–313 (RVAHMETSLG…TLLEAENSRL (118 aa)) is coil 2B. The residue at position 311 (Ser-311) is a Phosphoserine. Residues 314–1621 (QTPGGGSKTS…DRESWSSGED (1308 aa)) form a tail region. Thr-315 carries the post-translational modification Phosphothreonine. Ser-325 bears the Phosphoserine mark. A Phosphothreonine modification is found at Thr-338. Phosphoserine is present on residues Ser-355 and Ser-358. Thr-388 is modified (phosphothreonine). Residues Ser-398, Ser-471, Ser-476, Ser-548, Ser-564, Ser-578, Ser-588, Ser-638, Ser-680, Ser-702, Ser-746, and Ser-768 each carry the phosphoserine modification. Residues 439 to 490 (SVLPGPEEPGGQRQEASTGQSPEDHASLAPPLSPDHSSLEAKDGESGGSRVF) form a disordered region. Residues 670-788 (LEKENQEPLR…PPEKVDLEPL (119 aa)) form a disordered region. Basic and acidic residues-rich tracts occupy residues 687–725 (EALR…LKTL), 736–770 (LETE…RSLG), and 779–788 (PPEKVDLEPL). At Ser-790 the chain carries Phosphoserine. Residue Lys-811 forms a Glycyl lysine isopeptide (Lys-Gly) (interchain with G-Cter in SUMO1); alternate linkage. Lys-811 participates in a covalent cross-link: Glycyl lysine isopeptide (Lys-Gly) (interchain with G-Cter in SUMO2); alternate. A phosphoserine mark is found at Ser-820, Ser-831, and Ser-842. Thr-851 carries the phosphothreonine modification. Phosphoserine occurs at positions 894, 905, 913, and 934. A disordered region spans residues 895–1593 (LGAWNLENLR…GSALKTSWAG (699 aa)). Basic and acidic residues-rich tracts occupy residues 904–936 (RSPE…RSLE), 949–960 (QRWEDTVEKDQE), 980–994 (LNLR…KEEV), and 1012–1024 (GHPE…EQRG). At Ser-1016 the chain carries Phosphoserine. The span at 1085–1098 (GSEPAMGESAAGAE) shows a compositional bias: low complexity. Residues 1099–1110 (PGPGQGVGGLGD) show a composition bias toward gly residues. 2 stretches are compositionally biased toward basic and acidic residues: residues 1129 to 1145 (LEAK…KDLE) and 1159 to 1184 (GKSR…RGAE). 8 positions are modified to phosphoserine: Ser-1261, Ser-1282, Ser-1286, Ser-1310, Ser-1347, Ser-1409, Ser-1418, and Ser-1452. The segment covering 1275 to 1292 (PQEEGEESREESEEDELG) has biased composition (acidic residues). Residues 1409 to 1428 (SDGFADEEESGEEGEEDQEE) show a composition bias toward acidic residues. Composition is skewed to low complexity over residues 1440 to 1453 (GSSV…SSSQ) and 1460 to 1470 (SDSVSVSVPWD). Polar residues predominate over residues 1486-1495 (ETESQDSAEP). Residues Ser-1496, Ser-1498, Ser-1577, Ser-1617, and Ser-1618 each carry the phosphoserine modification.

The protein belongs to the intermediate filament family. In terms of assembly, forms homodimers and homotetramers in vitro. In mixtures with other intermediate filament proteins such as vimentin and alpha-internexin, tis protein preferentially forms heterodimers which can assemble to form intermediate filaments if nestin does not exceed 25%. Interacts with FHOD3. In terms of processing, constitutively phosphorylated. This increases during mitosis when the cytoplasmic intermediate filament network is reorganized. As to expression, CNS stem cells.

In terms of biological role, required for brain and eye development. Promotes the disassembly of phosphorylated vimentin intermediate filaments (IF) during mitosis and may play a role in the trafficking and distribution of IF proteins and other cellular factors to daughter cells during progenitor cell division. Required for survival, renewal and mitogen-stimulated proliferation of neural progenitor cells. This chain is Nestin (NES), found in Homo sapiens (Human).